We begin with the raw amino-acid sequence, 466 residues long: 3-isopropylmalate dehydratase large subunit (466 aa).

[4Fe-4S] cluster is bound by residues C347, C407, and C410.

Belongs to the aconitase/IPM isomerase family. LeuC type 1 subfamily. As to quaternary structure, heterodimer of LeuC and LeuD. [4Fe-4S] cluster serves as cofactor.

It carries out the reaction (2R,3S)-3-isopropylmalate = (2S)-2-isopropylmalate. It participates in amino-acid biosynthesis; L-leucine biosynthesis; L-leucine from 3-methyl-2-oxobutanoate: step 2/4. Its function is as follows. Catalyzes the isomerization between 2-isopropylmalate and 3-isopropylmalate, via the formation of 2-isopropylmaleate. This chain is 3-isopropylmalate dehydratase large subunit, found in Escherichia coli O157:H7.